The primary structure comprises 205 residues: Penta-EF hand domain-containing protein 2 (205 aa).

3 EF-hand domains span residues Glu45–Pro75, Leu76–Leu111, and Asp119–Gln141. Residues Asp54, Asn56, Ser58, Thr60, Glu65, Asp89, Asn91, Asn93, Gln95, and Glu100 each contribute to the Ca(2+) site.

Belongs to the Peflin/Sorcin family. In terms of assembly, in contrast to pefA, does not form homodimers in presence of Ca(2+). May form heterodimers with pefA.

Its subcellular location is the cytoplasm. The protein localises to the membrane. This Dictyostelium discoideum (Social amoeba) protein is Penta-EF hand domain-containing protein 2 (pefB).